Reading from the N-terminus, the 185-residue chain is Tetrahydromethanopterin S-methyltransferase subunit A 2 (185 aa).

Over 1 to 21 (MVDKKVDKKPVPEDWPHIVGD) the chain is Cytoplasmic. The chain crosses the membrane as a helical span at residues 22–38 (YVVGDAESPVAVVTLGS). Over 39-185 (HMEDEPVRAG…LNKNKPDENT (147 aa)) the chain is Extracellular. 5-hydroxybenzimidazolylcob(I)amide is bound at residue H88.

Belongs to the MtrA family. As to quaternary structure, the complex is composed of 8 subunits; MtrA, MtrB, MtrC, MtrD, MtrE, MtrF, MtrG and MtrH. It depends on 5-hydroxybenzimidazolylcob(I)amide as a cofactor.

It localises to the cell membrane. It catalyses the reaction 5-methyl-5,6,7,8-tetrahydromethanopterin + coenzyme M + 2 Na(+)(in) = 5,6,7,8-tetrahydromethanopterin + methyl-coenzyme M + 2 Na(+)(out). Its pathway is one-carbon metabolism; methanogenesis from CO(2); methyl-coenzyme M from 5,10-methylene-5,6,7,8-tetrahydromethanopterin: step 2/2. In terms of biological role, part of a complex that catalyzes the formation of methyl-coenzyme M and tetrahydromethanopterin from coenzyme M and methyl-tetrahydromethanopterin. This is an energy-conserving, sodium-ion translocating step. The polypeptide is Tetrahydromethanopterin S-methyltransferase subunit A 2 (Methanothermobacter marburgensis (strain ATCC BAA-927 / DSM 2133 / JCM 14651 / NBRC 100331 / OCM 82 / Marburg) (Methanobacterium thermoautotrophicum)).